The following is a 292-amino-acid chain: Siderophore triacetylfusarinine C esterase (292 aa).

The triacetylfusarinine C site is built by Arg97, Ser148, Tyr149, Ser174, Trp176, and His267.

Belongs to the esterase D family.

The protein localises to the cytoplasm. It carries out the reaction triacetylfusarinine C + 3 H2O = 3 N-acetylfusarinine + Fe(3+). Displays specific triacetylfusarinine C (TAFC) esterase activity but does not hydrolyze fusarinine C, which has the same core structure as TAFC. Hydrolysis optimizes but is not essential for TAFC-mediated iron uptake. Both extra- and intracellular siderophores have been shown to be crucial for the virulence. Subsequent to chelation of iron and uptake, FsC and TAFC are hydrolyzed and the iron is transferred to the metabolism or to the intracellular siderophore ferricrocin (FC) for transport and storage of iron. Hydrolyzes both TAFC and DF-TAFC with equal efficiencies, suggesting that its function might not be restricted to the release of iron from the siderophore but might also include the degradation of the iron-free chelator to protect cells. The protein is Siderophore triacetylfusarinine C esterase of Aspergillus fumigatus (strain ATCC MYA-4609 / CBS 101355 / FGSC A1100 / Af293) (Neosartorya fumigata).